A 456-amino-acid polypeptide reads, in one-letter code: Vitamin K-dependent protein C (456 aa).

Positions 1–20 (MWQLASLSLLLTICGTCSTA) are cleaved as a signal peptide. Residues 21-42 (APPGSVFSSSESAHQVLRIRKR) constitute a propeptide that is removed on maturation. The 42-residue stretch at 47 to 88 (LEEIRAGSLERECMEEICDFEEAKEIFQNVDDTLAYWSKYVD) folds into the Gla domain. 4-carboxyglutamate occurs at positions 48, 49, 56, 58, 61, 62, 67, 68, and 71. Cysteine 59 and cysteine 64 are disulfide-bonded. 4 cysteine pairs are disulfide-bonded: cysteine 92–cysteine 111, cysteine 101–cysteine 106, cysteine 105–cysteine 120, and cysteine 122–cysteine 131. EGF-like domains lie at 97-132 (PEHA…RFCQ) and 136-176 (SYIN…LQCQ). (3R)-3-hydroxyaspartate is present on aspartate 113. N-linked (GlcNAc...) asparagine glycosylation is present at asparagine 139. 5 cysteine pairs are disulfide-bonded: cysteine 140–cysteine 151, cysteine 147–cysteine 160, cysteine 162–cysteine 175, cysteine 183–cysteine 318, and cysteine 237–cysteine 253. Asparagine 202 is a glycosylation site (N-linked (GlcNAc...) asparagine). In terms of domain architecture, Peptidase S1 spans 211 to 445 (LVNGKVTRRG…YLDWIHSHIR (235 aa)). Histidine 252 functions as the Charge relay system in the catalytic mechanism. Asparagine 289 is a glycosylation site (N-linked (GlcNAc...) asparagine). Residue aspartate 298 is the Charge relay system of the active site. N-linked (GlcNAc...) asparagine glycosylation is present at asparagine 350. 2 disulfides stabilise this stretch: cysteine 368–cysteine 382 and cysteine 393–cysteine 421. The active-site Charge relay system is the serine 397.

The protein belongs to the peptidase S1 family. Synthesized as a single chain precursor, which is cleaved into a light chain and a heavy chain held together by a disulfide bond. The enzyme is then activated by thrombin, which cleaves a tetradecapeptide from the amino end of the heavy chain; this reaction, which occurs at the surface of endothelial cells, is strongly promoted by thrombomodulin. Post-translationally, the vitamin K-dependent, enzymatic carboxylation of some Glu residues allows the modified protein to bind calcium. In terms of processing, the iron and 2-oxoglutarate dependent 3-hydroxylation of aspartate and asparagine is (R) stereospecific within EGF domains. Plasma; synthesized in the liver.

The protein localises to the secreted. The protein resides in the golgi apparatus. It is found in the endoplasmic reticulum. The enzyme catalyses Degradation of blood coagulation factors Va and VIIIa.. Its function is as follows. Protein C is a vitamin K-dependent serine protease that regulates blood coagulation by inactivating factors Va and VIIIa in the presence of calcium ions and phospholipids. Exerts a protective effect on the endothelial cell barrier function. The polypeptide is Vitamin K-dependent protein C (PROC) (Canis lupus familiaris (Dog)).